The primary structure comprises 270 residues: uncharacterized protein (270 aa).

His171 functions as the Proton donor in the catalytic mechanism. The active-site Nucleophile is Cys261.

The protein belongs to the DDAH family.

This is an uncharacterized protein from Aeropyrum pernix (strain ATCC 700893 / DSM 11879 / JCM 9820 / NBRC 100138 / K1).